The chain runs to 388 residues: Cdc42 effector protein 1 (388 aa).

Positions 1–28 (MPGPQGGTGAPSMSLGKLSPVGWVPSSH) are disordered. A phosphoserine mark is found at Ser19 and Ser27. Position 34 is a phosphothreonine (Thr34). Residues 38 to 52 (ISPPLGDFRHTMHVG) enclose the CRIB domain. Residue Ser39 is modified to Phosphoserine. Residue Arg53 is modified to Omega-N-methylarginine. Phosphoserine occurs at positions 65, 77, 101, 113, 121, and 139. The disordered stretch occupies residues 165–206 (RLPRVEKHSSRDRDHDRDPDHSQDREQSSSPSEPNPNPELRR). The span at 167–191 (PRVEKHSSRDRDHDRDPDHSQDREQ) shows a compositional bias: basic and acidic residues. Ser193, Ser207, Ser209, and Ser212 each carry phosphoserine. Tandem repeats lie at residues 237–243 (PAANPPA) and 250–256 (PTAKPPA). The tract at residues 237–257 (PAANPPAPAANPAPTAKPPAD) is disordered. The segment at 237 to 270 (PAANPPAPAANPAPTAKPPADAVTTLDTVTSLPA) is 2 X 7 AA tandem repeats of [PT]-[AT]-A-[ENT]-[PT]-[PTS]-[AG]. Over residues 239 to 253 (ANPPAPAANPAPTAK) the composition is skewed to pro residues. 4 positions are modified to phosphoserine: Ser298, Ser318, Ser347, and Ser350.

Belongs to the BORG/CEP family. Interacts with RHOQ and CDC42, in a GTP-dependent manner.

The protein resides in the endomembrane system. Its subcellular location is the cytoplasm. The protein localises to the cytoskeleton. Probably involved in the organization of the actin cytoskeleton. Induced membrane extensions in fibroblasts. The sequence is that of Cdc42 effector protein 1 from Rattus norvegicus (Rat).